The chain runs to 140 residues: Large-conductance mechanosensitive channel (140 aa).

2 helical membrane-spanning segments follow: residues 16 to 36 (VIDLAVGVVIGAAFGKIVTAL) and 84 to 104 (INTVVQFVIIAFAIFLLVKLI).

Belongs to the MscL family. Homopentamer.

It localises to the cell inner membrane. Its function is as follows. Channel that opens in response to stretch forces in the membrane lipid bilayer. May participate in the regulation of osmotic pressure changes within the cell. The sequence is that of Large-conductance mechanosensitive channel from Xanthomonas oryzae pv. oryzae (strain MAFF 311018).